Here is a 282-residue protein sequence, read N- to C-terminus: NADPH-dependent 7-cyano-7-deazaguanine reductase (282 aa).

Position 82 to 84 (82 to 84 (IES)) interacts with substrate. Residue 84-85 (SK) coordinates NADPH. The active-site Thioimide intermediate is the Cys189. Asp196 acts as the Proton donor in catalysis. 228-229 (HE) serves as a coordination point for substrate. NADPH is bound at residue 257–258 (RG).

It belongs to the GTP cyclohydrolase I family. QueF type 2 subfamily. Homodimer.

The protein resides in the cytoplasm. It carries out the reaction 7-aminomethyl-7-carbaguanine + 2 NADP(+) = 7-cyano-7-deazaguanine + 2 NADPH + 3 H(+). It functions in the pathway tRNA modification; tRNA-queuosine biosynthesis. In terms of biological role, catalyzes the NADPH-dependent reduction of 7-cyano-7-deazaguanine (preQ0) to 7-aminomethyl-7-deazaguanine (preQ1). The chain is NADPH-dependent 7-cyano-7-deazaguanine reductase from Delftia acidovorans (strain DSM 14801 / SPH-1).